A 426-amino-acid chain; its full sequence is Serine--tRNA ligase (426 aa).

L-serine is bound at residue 230-232 (TAE). 261–263 (RSE) provides a ligand contact to ATP. Residue Glu-284 participates in L-serine binding. 348–351 (EISS) provides a ligand contact to ATP. Residue Ser-384 coordinates L-serine.

The protein belongs to the class-II aminoacyl-tRNA synthetase family. Type-1 seryl-tRNA synthetase subfamily. As to quaternary structure, homodimer. The tRNA molecule binds across the dimer.

It localises to the cytoplasm. The catalysed reaction is tRNA(Ser) + L-serine + ATP = L-seryl-tRNA(Ser) + AMP + diphosphate + H(+). It catalyses the reaction tRNA(Sec) + L-serine + ATP = L-seryl-tRNA(Sec) + AMP + diphosphate + H(+). Its pathway is aminoacyl-tRNA biosynthesis; selenocysteinyl-tRNA(Sec) biosynthesis; L-seryl-tRNA(Sec) from L-serine and tRNA(Sec): step 1/1. Its function is as follows. Catalyzes the attachment of serine to tRNA(Ser). Is also able to aminoacylate tRNA(Sec) with serine, to form the misacylated tRNA L-seryl-tRNA(Sec), which will be further converted into selenocysteinyl-tRNA(Sec). The polypeptide is Serine--tRNA ligase (Novosphingobium aromaticivorans (strain ATCC 700278 / DSM 12444 / CCUG 56034 / CIP 105152 / NBRC 16084 / F199)).